Here is a 414-residue protein sequence, read N- to C-terminus: Cyclic di-GMP phosphodiesterase PA4108 (414 aa).

The HD-GYP domain occupies Ile133 to Glu330. A divalent metal cation contacts are provided by His160, His192, Asp193, His221, His246, and His247.

In terms of assembly, monomer.

The catalysed reaction is 3',3'-c-di-GMP + 2 H2O = 2 GMP + 2 H(+). With respect to regulation, activated by Mg(2+) and Mn(2+). Phosphodiesterase (PDE) that catalyzes the hydrolysis of cyclic diguanylate (c-di-GMP) to GMP. Hydrolyzes c-di-GMP to GMP in a two-step reaction, via the linear intermediate 5'-phosphoguanylyl(3'-&gt;5')guanosine (pGpG). In vitro, can use pGpG as an alternative substrate and hydrolyze it into GMP. Acts in regulation of motility, synthesis of virulence determinants and biofilm architecture. The chain is Cyclic di-GMP phosphodiesterase PA4108 from Pseudomonas aeruginosa (strain ATCC 15692 / DSM 22644 / CIP 104116 / JCM 14847 / LMG 12228 / 1C / PRS 101 / PAO1).